A 91-amino-acid chain; its full sequence is DNA-binding protein HRL18 (91 aa).

It belongs to the bacterial histone-like protein family.

Histone-like DNA-binding protein which is capable of wrapping DNA to stabilize it, and thus to prevent its denaturation under extreme environmental conditions. The protein is DNA-binding protein HRL18 of Rhizobium leguminosarum.